A 402-amino-acid chain; its full sequence is Acetate kinase (402 aa).

Residue N10 coordinates Mg(2+). Position 17 (K17) interacts with ATP. Residue R89 coordinates substrate. D148 (proton donor/acceptor) is an active-site residue. Residues 208-212, 283-285, and 334-338 each bind ATP; these read HLGNG, DCR, and GIGEN. E389 is a binding site for Mg(2+).

Belongs to the acetokinase family. As to quaternary structure, homodimer. Mg(2+) serves as cofactor. It depends on Mn(2+) as a cofactor.

It localises to the cytoplasm. The catalysed reaction is acetate + ATP = acetyl phosphate + ADP. It functions in the pathway metabolic intermediate biosynthesis; acetyl-CoA biosynthesis; acetyl-CoA from acetate: step 1/2. Catalyzes the formation of acetyl phosphate from acetate and ATP. Can also catalyze the reverse reaction. The protein is Acetate kinase of Actinobacillus pleuropneumoniae serotype 5b (strain L20).